Consider the following 565-residue polypeptide: Heme/hemopexin transporter protein HuxB (565 aa).

Positions 1 to 26 (MKMRPRYSVIASAVSLGFVLSKSVMA) are cleaved as a signal peptide. The region spanning 73 to 150 (FPLTQVQILD…GTVKILLLKG (78 aa)) is the POTRA domain.

Belongs to the TPS (TC 1.B.20) family.

It is found in the cell outer membrane. Likely functions in the release of soluble HxuA from the cell. In terms of biological role, probable member of a two partner secretion pathway (TPS) in which it mediates the secretion of HuxA. The chain is Heme/hemopexin transporter protein HuxB (hxuB) from Haemophilus influenzae (strain 86-028NP).